Here is a 399-residue protein sequence, read N- to C-terminus: Phosphoglycerate kinase (399 aa).

Substrate contacts are provided by residues 24 to 26 (DLN), R41, 64 to 67 (HLGR), R123, and R160. ATP contacts are provided by residues K210, G298, E329, and 355-358 (GGDS).

It belongs to the phosphoglycerate kinase family. As to quaternary structure, monomer.

It localises to the cytoplasm. It catalyses the reaction (2R)-3-phosphoglycerate + ATP = (2R)-3-phospho-glyceroyl phosphate + ADP. The protein operates within carbohydrate degradation; glycolysis; pyruvate from D-glyceraldehyde 3-phosphate: step 2/5. This Salinispora arenicola (strain CNS-205) protein is Phosphoglycerate kinase.